Here is a 299-residue protein sequence, read N- to C-terminus: Taste receptor type 2 member 1 (299 aa).

Residues 1 to 9 (MLESHLIIY) lie on the Extracellular side of the membrane. The helical transmembrane segment at 10–30 (FLLAVIQFLLGIFTNGIIVVV) threads the bilayer. At 31–55 (NGIDLIKHRKMAPLDLLLSCLAVSR) the chain is on the cytoplasmic side. The helical transmembrane segment at 56 to 76 (IFLQLFIFYVNVIVIFFIEFI) threads the bilayer. Residues 77 to 81 (MCSAN) lie on the Extracellular side of the membrane. The chain crosses the membrane as a helical span at residues 82–102 (CAILLFINELELWLATWLGVF). Residues 103–124 (YCAKVASVRHPLFXWLKMRISK) are Cytoplasmic-facing. The chain crosses the membrane as a helical span at residues 125 to 145 (LVPWMILGSLLYVSMICVFHS). Residues 146–178 (KYAGFMVPYFLRNFFSQNTTIQKEDTLAIQIFS) lie on the Extracellular side of the membrane. Residue Asn163 is glycosylated (N-linked (GlcNAc...) asparagine). A helical transmembrane segment spans residues 179–199 (FVAEFSVPLLIFLVAVLLLIF). Over 200 to 222 (SLGRHTRQMRNTVAGSRVPGRGA) the chain is Cytoplasmic. Residues 223-243 (PISALLSILSFLILYFSHCMI) traverse the membrane as a helical segment. At 244-257 (KVFLSSLKFHIRRF) the chain is on the extracellular side. Residues 258–278 (IFLFFILVIGIYPSGHSLILI) form a helical membrane-spanning segment. The Cytoplasmic portion of the chain corresponds to 279–299 (LGNPKLKQNAKKFLLHSKCCQ).

Belongs to the G-protein coupled receptor T2R family.

The protein localises to the membrane. Receptor that may play a role in the perception of bitterness and is gustducin-linked. May play a role in sensing the chemical composition of the gastrointestinal content. The activity of this receptor may stimulate alpha gustducin, mediate PLC-beta-2 activation and lead to the gating of TRPM5. The polypeptide is Taste receptor type 2 member 1 (TAS2R1) (Gorilla gorilla gorilla (Western lowland gorilla)).